Here is a 469-residue protein sequence, read N- to C-terminus: MQMADAATIATMNKAAGGDKLAELFSLVPDLLEAANTSGNASLQLPDLWWELGLELPDGAPPGHPPGSGGAESADTEARVRILISVVYWVVCALGLAGNLLVLYLMKSMQGWRKSSINLFVTNLALTDFQFVLTLPFWAVENALDFKWPFGKAMCKIVSMVTSMNMYASVFFLTAMSVTRYHSVASALKSHRTRGHGRGDCCGRSLGDSCCFSAKALCVWIWALAALASLPSAIFSTTVKVMGEELCLVRFPDKLLGRDRQFWLGLYHSQKVLLGFVLPLGIIILCYLLLVRFIADRRAAGTKGGAAVAGGRPTGASARRLSKVTKSVTIVVLSFFLCWLPNQALTTWSILIKFNAVPFSQEYFLCQVYAFPVSVCLAHSNSCLNPVLYCLVRREFRKALKSLLWRIASPSITSMRPFTATTKPEHEDQGLQAPAPPHAAAEPDLLYYPPGVVVYSGGRYDLLPSSSAY.

At 1–81 (MQMADAATIA…ESADTEARVR (81 aa)) the chain is on the extracellular side. Residues N36 and N40 are each glycosylated (N-linked (GlcNAc...) asparagine). Residues 82-102 (ILISVVYWVVCALGLAGNLLV) form a helical membrane-spanning segment. The Cytoplasmic portion of the chain corresponds to 103–119 (LYLMKSMQGWRKSSINL). Residues 120 to 140 (FVTNLALTDFQFVLTLPFWAV) form a helical membrane-spanning segment. Residues 141-156 (ENALDFKWPFGKAMCK) are Extracellular-facing. Residues C155 and C247 are joined by a disulfide bond. Residues 157 to 177 (IVSMVTSMNMYASVFFLTAMS) traverse the membrane as a helical segment. Residues 178-215 (VTRYHSVASALKSHRTRGHGRGDCCGRSLGDSCCFSAK) are Cytoplasmic-facing. The helical transmembrane segment at 216–236 (ALCVWIWALAALASLPSAIFS) threads the bilayer. Residues 237 to 270 (TTVKVMGEELCLVRFPDKLLGRDRQFWLGLYHSQ) lie on the Extracellular side of the membrane. The helical transmembrane segment at 271–291 (KVLLGFVLPLGIIILCYLLLV) threads the bilayer. The Cytoplasmic portion of the chain corresponds to 292–329 (RFIADRRAAGTKGGAAVAGGRPTGASARRLSKVTKSVT). The chain crosses the membrane as a helical span at residues 330 to 350 (IVVLSFFLCWLPNQALTTWSI). Residues 351 to 356 (LIKFNA) are Extracellular-facing. A helical transmembrane segment spans residues 357-377 (VPFSQEYFLCQVYAFPVSVCL). The Cytoplasmic segment spans residues 378–469 (AHSNSCLNPV…YDLLPSSSAY (92 aa)).

Belongs to the G-protein coupled receptor 1 family. As to expression, expressed predominantly in brain regions. Highest expression in substantia nigra and pituitary, followed by hippocampus, spinal cord, amygdala, caudate nucleus and corpus callosum, quite low level in cerebellum. In peripheral tissues, relatively high levels in adrenal glands, low levels in pancreas, salivary gland, placenta, mammary gland and testis.

The protein resides in the cell membrane. Functionally, receptor for RNL3/relaxin-3. Binding of the ligand inhibit cAMP accumulation. In Homo sapiens (Human), this protein is Relaxin-3 receptor 1 (RXFP3).